Reading from the N-terminus, the 257-residue chain is Urease accessory protein UreD (257 aa).

Belongs to the UreD family. UreD, UreF and UreG form a complex that acts as a GTP-hydrolysis-dependent molecular chaperone, activating the urease apoprotein by helping to assemble the nickel containing metallocenter of UreC. The UreE protein probably delivers the nickel.

It localises to the cytoplasm. In terms of biological role, required for maturation of urease via the functional incorporation of the urease nickel metallocenter. This chain is Urease accessory protein UreD, found in Sporosarcina pasteurii (Bacillus pasteurii).